A 201-amino-acid polypeptide reads, in one-letter code: Syndecan-2 (201 aa).

Positions 1 to 18 (MRRAWILLTLGLVACVSA) are cleaved as a signal peptide. Residues 19 to 144 (ESRAELTSDK…HSDSLFKRTE (126 aa)) lie on the Extracellular side of the membrane. Residues Ser-41, Ser-55, and Ser-57 are each glycosylated (O-linked (Xyl...) (glycosaminoglycan) serine). 2 disordered regions span residues 42-70 (GVYP…ELTT) and 90-130 (TLNI…DTNV). Polar residues predominate over residues 90 to 102 (TLNIQNKIPAQTK). Residue Thr-101 is glycosylated (O-linked (GalNAc...) threonine). Residues 103–123 (SPEETDKEKVHLSDSERKMDP) show a composition bias toward basic and acidic residues. Ser-115 carries the phosphoserine; by FAM20C modification. Residues 145-169 (VLAAVIAGGVIGFLFAIFLILLLVY) form a helical membrane-spanning segment. The Cytoplasmic portion of the chain corresponds to 170–201 (RMRKKDEGSYDLGERKPSSAAYQKAPTKEFYA). Positions 178-201 (SYDLGERKPSSAAYQKAPTKEFYA) are disordered. Residue Ser-187 is modified to Phosphoserine.

Belongs to the syndecan proteoglycan family. As to quaternary structure, interacts (via cytoplasmic domain) with SARM1. Forms a complex with SDCBP and PDCD6IP. Post-translationally, O-glycosylated with core 1 or possibly core 8 glycans. Contains heparan sulfate. Also contains chondroitin sulfate.

It is found in the membrane. Cell surface proteoglycan which regulates dendritic arbor morphogenesis. This Homo sapiens (Human) protein is Syndecan-2 (SDC2).